Consider the following 449-residue polypeptide: Naphthalene 1,2-dioxygenase system, large oxygenase component (449 aa).

The region spanning 39–137 (WLFLTHDSLI…LNKKCLGLKE (99 aa)) is the Rieske domain. Positions 81, 83, 101, and 104 each coordinate [2Fe-2S] cluster. His-208, His-213, and Asp-362 together coordinate Fe cation.

This sequence belongs to the bacterial ring-hydroxylating dioxygenase alpha subunit family. As to quaternary structure, the naphthalene dioxygenase (NDO) multicomponent enzyme system is composed of an electron transfer component and a dioxygenase component (iron sulfur protein (ISP)). The electron transfer component is composed of a ferredoxin reductase (NdoR) and a ferredoxin (NdoA), and the dioxygenase component is formed of a heterohexamer (trimer of heterodimers) of three large alpha subunits (NdoB) and three small beta subunits (NdoC). [2Fe-2S] cluster is required as a cofactor. The cofactor is Fe(2+).

It catalyses the reaction naphthalene + NADH + O2 + H(+) = (1R,2S)-1,2-dihydronaphthalene-1,2-diol + NAD(+). It functions in the pathway aromatic compound metabolism; naphthalene degradation. Component of the naphthalene dioxygenase (NDO) multicomponent enzyme system which catalyzes the incorporation of both atoms of molecular oxygen into naphthalene to form cis-(1R,2S)-dihydroxy-1,2-dihydronaphthalene. The alpha subunit has a catalytic role in the holoenzyme. Also able to catalyze the cis-dihydroxylation of biphenyl and phenanthrene. The polypeptide is Naphthalene 1,2-dioxygenase system, large oxygenase component (Pseudomonas putida (Arthrobacter siderocapsulatus)).